The following is a 156-amino-acid chain: S-ribosylhomocysteine lyase (156 aa).

His56, His60, and Cys123 together coordinate Fe cation.

This sequence belongs to the LuxS family. Homodimer. Requires Fe cation as cofactor.

The catalysed reaction is S-(5-deoxy-D-ribos-5-yl)-L-homocysteine = (S)-4,5-dihydroxypentane-2,3-dione + L-homocysteine. In terms of biological role, involved in the synthesis of autoinducer 2 (AI-2) which is secreted by bacteria and is used to communicate both the cell density and the metabolic potential of the environment. The regulation of gene expression in response to changes in cell density is called quorum sensing. Catalyzes the transformation of S-ribosylhomocysteine (RHC) to homocysteine (HC) and 4,5-dihydroxy-2,3-pentadione (DPD). The sequence is that of S-ribosylhomocysteine lyase from Staphylococcus haemolyticus (strain JCSC1435).